Reading from the N-terminus, the 336-residue chain is Phosphate acyltransferase (336 aa).

Belongs to the PlsX family. Homodimer. Probably interacts with PlsY.

It localises to the cytoplasm. It catalyses the reaction a fatty acyl-[ACP] + phosphate = an acyl phosphate + holo-[ACP]. The protein operates within lipid metabolism; phospholipid metabolism. Catalyzes the reversible formation of acyl-phosphate (acyl-PO(4)) from acyl-[acyl-carrier-protein] (acyl-ACP). This enzyme utilizes acyl-ACP as fatty acyl donor, but not acyl-CoA. The polypeptide is Phosphate acyltransferase (Dictyoglomus turgidum (strain DSM 6724 / Z-1310)).